Here is a 280-residue protein sequence, read N- to C-terminus: Diaminopimelate epimerase (280 aa).

Substrate contacts are provided by Asn13 and Asn64. Residue Cys73 is the Proton donor of the active site. Substrate contacts are provided by residues Gly74–Asn75, Asn164, Asn197, and Glu215–Arg216. The Proton acceptor role is filled by Cys224. Residue Gly225–Thr226 participates in substrate binding.

The protein belongs to the diaminopimelate epimerase family. As to quaternary structure, homodimer.

Its subcellular location is the cytoplasm. It carries out the reaction (2S,6S)-2,6-diaminopimelate = meso-2,6-diaminopimelate. The protein operates within amino-acid biosynthesis; L-lysine biosynthesis via DAP pathway; DL-2,6-diaminopimelate from LL-2,6-diaminopimelate: step 1/1. In terms of biological role, catalyzes the stereoinversion of LL-2,6-diaminopimelate (L,L-DAP) to meso-diaminopimelate (meso-DAP), a precursor of L-lysine and an essential component of the bacterial peptidoglycan. The sequence is that of Diaminopimelate epimerase from Leptospira biflexa serovar Patoc (strain Patoc 1 / Ames).